The primary structure comprises 308 residues: Quinolinate synthase (308 aa).

2 residues coordinate iminosuccinate: histidine 24 and serine 41. Residue cysteine 86 participates in [4Fe-4S] cluster binding. Iminosuccinate contacts are provided by residues 112 to 114 (YIN) and serine 129. Cysteine 172 is a [4Fe-4S] cluster binding site. Residues 198–200 (HPE) and threonine 215 each bind iminosuccinate. Residue cysteine 265 participates in [4Fe-4S] cluster binding.

It belongs to the quinolinate synthase family. Type 2 subfamily. [4Fe-4S] cluster serves as cofactor.

The protein resides in the cytoplasm. It carries out the reaction iminosuccinate + dihydroxyacetone phosphate = quinolinate + phosphate + 2 H2O + H(+). It participates in cofactor biosynthesis; NAD(+) biosynthesis; quinolinate from iminoaspartate: step 1/1. Its function is as follows. Catalyzes the condensation of iminoaspartate with dihydroxyacetone phosphate to form quinolinate. The sequence is that of Quinolinate synthase from Sulfurihydrogenibium sp. (strain YO3AOP1).